The primary structure comprises 492 residues: Adenosylhomocysteinase (492 aa).

Substrate contacts are provided by Thr-68, Asp-153, and Glu-215. Residue 216–218 participates in NAD(+) binding; it reads TTT. 2 residues coordinate substrate: Lys-245 and Asp-249. NAD(+) is bound by residues Asn-250, 279 to 284, Glu-302, Asn-337, 358 to 360, and Asn-406; these read GYGDVG and IGH.

It belongs to the adenosylhomocysteinase family. It depends on NAD(+) as a cofactor.

The protein localises to the cytoplasm. The enzyme catalyses S-adenosyl-L-homocysteine + H2O = L-homocysteine + adenosine. It participates in amino-acid biosynthesis; L-homocysteine biosynthesis; L-homocysteine from S-adenosyl-L-homocysteine: step 1/1. Its function is as follows. May play a key role in the regulation of the intracellular concentration of adenosylhomocysteine. This Mycobacterium leprae (strain Br4923) protein is Adenosylhomocysteinase.